The following is a 450-amino-acid chain: Putative mediator of RNA polymerase II transcription subunit 27 (450 aa).

A coiled-coil region spans residues 15–118 (QQQQAQQHQQ…QKLKKSMDLV (104 aa)).

Belongs to the Mediator complex subunit 27 family. In terms of assembly, component of the Mediator complex.

The protein localises to the nucleus. Its function is as follows. Component of the Mediator complex, a coactivator involved in the regulated transcription of nearly all RNA polymerase II-dependent genes. Mediator functions as a bridge to convey information from gene-specific regulatory proteins to the basal RNA polymerase II transcription machinery. Mediator is recruited to promoters by direct interactions with regulatory proteins and serves as a scaffold for the assembly of a functional preinitiation complex with RNA polymerase II and the general transcription factors. This Dictyostelium discoideum (Social amoeba) protein is Putative mediator of RNA polymerase II transcription subunit 27 (med27).